Consider the following 392-residue polypeptide: Peptidoglycan hydrolase PcsB (392 aa).

The first 27 residues, 1–27 (MKKKILASLLLSTVMVSQVAVLTTAHA), serve as a signal peptide directing secretion. Coiled coils occupy residues 34–96 (IAAQ…LSKN) and 191–227 (TKQA…AEAE). The segment at 47-267 (QQQEAQKQVD…TAQVQAVSES (221 aa)) is interacts with large extracellular loop of FtsX. Residues 267 to 390 (SAAAPVRAKV…TSEGFVTYIY (124 aa)) form the Peptidase C51 domain.

In terms of assembly, homodimer. Interacts (via N-terminal coiled coil domain) with FtsX (via large extracellular loop). This interaction directs PcsB to equatorial and septal sites of dividing cells. Interacts with FtsE.

It localises to the cell membrane. The protein localises to the cell septum. The protein resides in the secreted. Lacks peptidoglycan-hydrolase activity in vitro, probably due to auto-inhibition by the CC domain. In the homodimer, interaction between the CC domain in one monomer and the hydrolase active site in the peptidase C51/CHAP domain in the other monomer probably mediates auto-inhibition of the hydrolase activity. Functionally, peptidoglycan-hydrolase activity. Required in maintaining normal growth and cellular morphology. Involved in splitting of the septum during cell division. This Streptococcus pneumoniae serotype 2 (strain D39 / NCTC 7466) protein is Peptidoglycan hydrolase PcsB.